We begin with the raw amino-acid sequence, 592 residues long: Keratin, type II cytoskeletal 5 (592 aa).

The segment covering 1-18 (MSRQSSVSFRSGGSRSFS) has biased composition (low complexity). The segment at 1–20 (MSRQSSVSFRSGGSRSFSTA) is disordered. A head region spans residues 1 to 169 (MSRQSSVSFR…DPSIQRVRTE (169 aa)). Ser5, Ser8, Ser16, and Ser21 each carry phosphoserine. Residue Thr24 is modified to Phosphothreonine; by CDK1. Residues Ser26, Ser36, Ser50, Ser64, Ser71, Ser75, and Ser82 each carry the phosphoserine modification. Thr153 carries the post-translational modification Phosphothreonine; by CDK1. A Phosphothreonine; by AURKB modification is found at Thr168. The coil 1A stretch occupies residues 170–205 (EREQIKTLNNKFASFIDKVRFLEQQNKVLDTKWTLL). Positions 170-483 (EREQIKTLNN…KLLEGEECRL (314 aa)) constitute an IF rod domain. The interval 206–224 (QEQGTKTVRQNLEPLFEQY) is linker 1. Residues 225-317 (INNLRRQLDS…FFDAELSQMQ (93 aa)) are coil 1B. Residues 318–340 (THVSDTSVVLSMDNNRNLDLDSI) form a linker 12 region. Residues 341-479 (IAEVKAQYEE…ATYRKLLEGE (139 aa)) form a coil 2 region. A tail region spans residues 480–592 (ECRLSGEGVG…TSSSRKSFKS (113 aa)). The tract at residues 568–592 (GSGGGSSSSVKFVSTTSSSRKSFKS) is disordered. Positions 574–592 (SSSVKFVSTTSSSRKSFKS) are enriched in low complexity.

The protein belongs to the intermediate filament family. As to quaternary structure, heterodimer of a type I and a type II keratin. Heterodimer with type I keratin KRT25 leading to the formation of keratin intermediate filament (KIF) network. Forms a heterodimer (via 2B domains) with KRT14 (via 2B domains). Interacts with TCHP. Interacts with EPPK1. Interacts with AMELX. Interacts with PKP1 (via N-terminus) and PKP2. Post-translationally, phosphorylated by CDK1, AURKB and Rho-kinase, phosphorylation is regulated by the cell cycle. Thr-24 phosphorylation, mediated by CDK1, peaks during prometaphase or metaphase cells with phosphorylated filamentous structures evident throughout the cytoplasm during early mitosis. CDK1 phosphorylates Thr-24 in mitotic cells at the site of injury. O-glycosylated.

The protein resides in the cytoplasm. Functionally, required for the formation of keratin intermediate filaments in the basal epidermis and maintenance of the skin barrier in response to mechanical stress. Regulates the recruitment of Langerhans cells to the epidermis, potentially by modulation of the abundance of macrophage chemotactic cytokines, macrophage inflammatory cytokines and CTNND1 localization in keratinocytes. The polypeptide is Keratin, type II cytoskeletal 5 (KRT5) (Pan troglodytes (Chimpanzee)).